Here is a 417-residue protein sequence, read N- to C-terminus: MKFTNLTAKEFSDFTDRMTYSHFTQMEGNYELKVAEGTESHLVGIKNNDNEVIAACLLTAVPVMKIFKYFYSNRGPVIDYNNKELVHFFFNELSKYVKKYNCLYLRVDPYLPYQYLNHEGEITGNAGHDWIFDELESLGYKHEGFHKGFDPVLQIRYHSVLNLANKSANDVLKNMDGLRKRNTKKVKKNGVKVRFLSEEELPIFRSFMEDTSETKDFADREDSFYYNRFKHYKDRVLVPLAYINFDEYIEELNNERNVLNKDYNKALKDIEKRPENKKAHNKKENLEQQLDANQQKINEAKNLKQEHGNELPISAGFFIINPFEVVYYAGGTSNRYRHFAGSYAVQWKMINYAIEHGINRYNFYGISGDFSEDAEDAGVVKFKKGYDADVIEYVGDFIKPINKPMYNIYRTLKKLKK.

It belongs to the FemABX family.

The protein localises to the cytoplasm. The enzyme catalyses beta-D-GlcNAc-(1-&gt;4)-Mur2Ac(oyl-L-Ala-D-isoglutaminyl-L-Lys-(N(6)-Gly)-D-Ala-D-Ala)-di-trans,octa-cis-undecaprenyl diphosphate + 2 glycyl-tRNA(Gly) = MurNAc-L-Ala-D-isoglutaminyl-L-Lys-(N(6)-tri-Gly)-D-Ala-D-Ala-diphospho-di-trans,octa-cis-undecaprenyl-GlcNAc + 2 tRNA(Gly) + 2 H(+). Its function is as follows. Catalyzes the incorporation of amino acid(s) into the interchain peptide bridge of peptidoglycan, using aminoacyl-tRNA as amino acid donor. The protein is Aminoacyltransferase FemA (femA) of Staphylococcus epidermidis (strain ATCC 35984 / DSM 28319 / BCRC 17069 / CCUG 31568 / BM 3577 / RP62A).